The primary structure comprises 241 residues: Serine protease 58 (241 aa).

A signal peptide spans 1–17 (MKFILLWALLNLTVALA). The Peptidase S1 domain occupies 18–239 (FNPDYTVSST…YIPWIENVIQ (222 aa)). An intrachain disulfide couples Cys-41 to Cys-57. Active-site charge relay system residues include His-56 and Asp-101. 3 disulfide bridges follow: Cys-133/Cys-201, Cys-165/Cys-180, and Cys-191/Cys-215. 2 N-linked (GlcNAc...) asparagine glycosylation sites follow: Asn-156 and Asn-173. The Charge relay system role is filled by Ser-195.

The protein belongs to the peptidase S1 family.

It localises to the secreted. It carries out the reaction Preferential cleavage: Arg-|-Xaa, Lys-|-Xaa.. This chain is Serine protease 58 (PRSS58), found in Homo sapiens (Human).